Here is a 194-residue protein sequence, read N- to C-terminus: Interleukin-17C (194 aa).

Positions 1–16 (MSLLLLGWLPTGMTHQ) are cleaved as a signal peptide. 2 cysteine pairs are disulfide-bonded: cysteine 125/cysteine 185 and cysteine 130/cysteine 187.

Belongs to the IL-17 family. In terms of assembly, binds to a heterodimer formed by IL17RA and IL17RE. In terms of tissue distribution, expressed by epithelial cells after bacterial challenge. Low expression, if any, in lymphocytes.

The protein resides in the secreted. Cytokine that plays a crucial role in innate immunity of the epithelium, including to intestinal bacterial pathogens, in an autocrine manner. Stimulates the production of antibacterial peptides and pro-inflammatory molecules for host defense by signaling through the NFKB and MAPK pathways. Acts synergically with IL22, TNF and IL1B in inducing antibacterial peptides. May have protective function by maintaining epithelial homeostasis after an inflammatory challenge, such as that caused in the intestine by dextran sulfate sodium in a colitis model. May also promote an inflammatory phenotype, such as skin in a psoriasis model. Enhanced IL17C/IL17RE signaling may also lead to greater susceptibility to autoimmune diseases, such as autoimmune encephalitis. This is Interleukin-17C (Il17c) from Mus musculus (Mouse).